We begin with the raw amino-acid sequence, 137 residues long: Methylglyoxal synthase (137 aa).

An MGS-like domain is found at 1-137 (MKIALIAHDK…NLVRGGEPNV (137 aa)). Residues histidine 8, lysine 12, 34 to 37 (TGTT), and 54 to 55 (SG) contribute to the substrate site. Aspartate 60 serves as the catalytic Proton donor/acceptor. Residue histidine 87 participates in substrate binding.

The protein belongs to the methylglyoxal synthase family.

It catalyses the reaction dihydroxyacetone phosphate = methylglyoxal + phosphate. Functionally, catalyzes the formation of methylglyoxal from dihydroxyacetone phosphate. The sequence is that of Methylglyoxal synthase from Bacillus velezensis (strain DSM 23117 / BGSC 10A6 / LMG 26770 / FZB42) (Bacillus amyloliquefaciens subsp. plantarum).